Consider the following 364-residue polypeptide: Probable tartrate dehydrogenase/decarboxylase TtuC (364 aa).

Mn(2+) contacts are provided by Asp-222, Asp-246, and Asp-250.

It belongs to the isocitrate and isopropylmalate dehydrogenases family. It depends on Mg(2+) as a cofactor. Mn(2+) is required as a cofactor. Requires K(+) as cofactor.

Its subcellular location is the cytoplasm. It catalyses the reaction tartrate + NAD(+) = 2-hydroxy-3-oxosuccinate + NADH + H(+). The enzyme catalyses (2R,3S)-tartrate + NAD(+) = 2-hydroxy-3-oxosuccinate + NADH + H(+). It carries out the reaction (2R,3R)-tartrate + NAD(+) = 2-hydroxy-3-oxosuccinate + NADH + H(+). The catalysed reaction is (2R,3R)-tartrate + H(+) = (R)-glycerate + CO2. It catalyses the reaction (R)-malate + NAD(+) = pyruvate + CO2 + NADH. It functions in the pathway carbohydrate acid metabolism; tartrate degradation; 2-hydroxy-3-oxosuccinate from L-tartrate: step 1/1. Its pathway is carbohydrate acid metabolism; tartrate degradation; 2-hydroxy-3-oxosuccinate from meso-tartrate: step 1/1. The protein operates within carbohydrate acid metabolism; tartrate degradation; D-glycerate from L-tartrate: step 1/1. Its function is as follows. Has multiple catalytic activities. Apart from catalyzing the oxidation of (+)-tartrate to oxaloglycolate, also converts meso-tartrate to D-glycerate and catalyzes the oxidative decarboxylation of D-malate to pyruvate. The sequence is that of Probable tartrate dehydrogenase/decarboxylase TtuC (ttuC) from Agrobacterium vitis (Rhizobium vitis).